The chain runs to 827 residues: Glycerol-3-phosphate acyltransferase 1, mitochondrial (827 aa).

Topologically, residues 1–87 (MEESSVTVGT…FFNPSIPSLG (87 aa)) are cytoplasmic. The interval 80–120 (NPSIPSLGLRNVIYINETHTRHRGWLARRLSYILFVQERDV) is important for mitochondrial localization. An intramembrane segment occupies 88-118 (LRNVIYINETHTRHRGWLARRLSYILFVQER). At 119-827 (DVHKGMFATS…LEYILSFVVL (709 aa)) the chain is on the cytoplasmic side. The short motif at 230–235 (HRSHID) is the HXXXXD motif element. Residues Arg-278, Arg-279, Lys-288, Arg-293, and Arg-328 each contribute to the CoA site. Ser-380 carries the phosphoserine modification. Arg-462 lines the CoA pocket. Phosphoserine is present on residues Ser-687 and Ser-694. An N6-acetyllysine mark is found at Lys-779 and Lys-783.

It belongs to the GPAT/DAPAT family. In terms of tissue distribution, highest levels in liver, intermediate levels in muscle and kidney, and lowest levels in lung and brain.

It is found in the mitochondrion outer membrane. The catalysed reaction is sn-glycerol 3-phosphate + an acyl-CoA = a 1-acyl-sn-glycero-3-phosphate + CoA. It catalyses the reaction (9Z,12Z)-octadecadienoyl-CoA + sn-glycerol 3-phosphate = 1-(9Z,12Z)-octadecadienoyl-sn-glycero-3-phosphate + CoA. The enzyme catalyses sn-glycerol 3-phosphate + (9Z)-octadecenoyl-CoA = 1-(9Z-octadecenoyl)-sn-glycero-3-phosphate + CoA. It carries out the reaction sn-glycerol 3-phosphate + octadecanoyl-CoA = 1-octadecanoyl-sn-glycero-3-phosphate + CoA. The catalysed reaction is sn-glycerol 3-phosphate + hexadecanoyl-CoA = 1-hexadecanoyl-sn-glycero-3-phosphate + CoA. It catalyses the reaction dodecanoyl-CoA + sn-glycerol 3-phosphate = 1-dodecanoyl-sn-glycerol 3-phosphate + CoA. The enzyme catalyses 1-acyl-sn-glycero-3-phospho-(1'-sn-glycerol) + an acyl-CoA = a 1,2-diacyl-sn-glycero-3-phospho-(1'-sn-glycerol) + CoA. The protein operates within phospholipid metabolism; CDP-diacylglycerol biosynthesis; CDP-diacylglycerol from sn-glycerol 3-phosphate: step 1/3. Its function is as follows. Mitochondrial membrane protein that catalyzes the essential first step of biosynthesis of glycerolipids such as triglycerides, phosphatidic acids and lysophosphatidic acids. Esterifies acyl-group from acyl-coenzyme A (acyl-CoA) to the sn-1 position of glycerol-3-phosphate, to produce lysophosphatidic acid. Has a narrow hydrophobic binding cleft that selects for a linear acyl chain. Catalytic activity is higher for substrates with a 16-carbon acyl chain. In Mus musculus (Mouse), this protein is Glycerol-3-phosphate acyltransferase 1, mitochondrial.